The following is a 30-amino-acid chain: Nattererin-2 (30 aa).

In terms of tissue distribution, expressed by the skin glands.

The protein resides in the secreted. Its function is as follows. Probably has antibacterial activity. This Physalaemus nattereri (Cuyaba dwarf frog) protein is Nattererin-2.